A 147-amino-acid chain; its full sequence is Anti-sigma F factor (147 aa).

The protein belongs to the anti-sigma-factor family.

It carries out the reaction L-seryl-[protein] + ATP = O-phospho-L-seryl-[protein] + ADP + H(+). The enzyme catalyses L-threonyl-[protein] + ATP = O-phospho-L-threonyl-[protein] + ADP + H(+). Functionally, binds to sigma F and blocks its ability to form an RNA polymerase holoenzyme (E-sigma F). Phosphorylates SpoIIAA on a serine residue. This phosphorylation may enable SpoIIAA to act as an anti-anti-sigma factor that counteracts SpoIIAB and thus releases sigma F from inhibition. The protein is Anti-sigma F factor of Heyndrickxia coagulans (Weizmannia coagulans).